An 87-amino-acid polypeptide reads, in one-letter code: Small ribosomal subunit protein uS15c (87 aa).

Belongs to the universal ribosomal protein uS15 family. As to quaternary structure, part of the 30S ribosomal subunit.

It localises to the plastid. Its subcellular location is the chloroplast. In Coffea arabica (Arabian coffee), this protein is Small ribosomal subunit protein uS15c (rps15).